A 394-amino-acid chain; its full sequence is Elongation factor Tu (394 aa).

Positions Lys10–Lys204 constitute a tr-type G domain. The interval Gly19–Thr26 is G1. Gly19–Thr26 is a GTP binding site. Position 26 (Thr26) interacts with Mg(2+). Residues Gly60–Asn64 are G2. The tract at residues Asp81 to Gly84 is G3. Residues Asp81–His85 and Asn136–Asp139 contribute to the GTP site. A G4 region spans residues Asn136–Asp139. A G5 region spans residues Ser174–Leu176.

Belongs to the TRAFAC class translation factor GTPase superfamily. Classic translation factor GTPase family. EF-Tu/EF-1A subfamily. As to quaternary structure, monomer.

It is found in the cytoplasm. It carries out the reaction GTP + H2O = GDP + phosphate + H(+). Functionally, GTP hydrolase that promotes the GTP-dependent binding of aminoacyl-tRNA to the A-site of ribosomes during protein biosynthesis. This Blochmanniella pennsylvanica (strain BPEN) protein is Elongation factor Tu.